The sequence spans 245 residues: Orotidine 5'-phosphate decarboxylase (245 aa).

Substrate is bound by residues Asp22, Lys44, 71-80 (DLKFHDIPNT), Thr131, Arg192, Gln201, Gly221, and Arg222. The active-site Proton donor is the Lys73.

Belongs to the OMP decarboxylase family. Type 1 subfamily. Homodimer.

It catalyses the reaction orotidine 5'-phosphate + H(+) = UMP + CO2. The protein operates within pyrimidine metabolism; UMP biosynthesis via de novo pathway; UMP from orotate: step 2/2. Catalyzes the decarboxylation of orotidine 5'-monophosphate (OMP) to uridine 5'-monophosphate (UMP). This is Orotidine 5'-phosphate decarboxylase from Yersinia pseudotuberculosis serotype O:3 (strain YPIII).